The sequence spans 968 residues: RNA polymerase-associated protein RapA (968 aa).

Residues E163–D332 enclose the Helicase ATP-binding domain. Position 176–183 (D176–T183) interacts with ATP. Positions D278–H281 match the DEAH box motif. One can recognise a Helicase C-terminal domain in the interval R491–L655.

Belongs to the SNF2/RAD54 helicase family. RapA subfamily. As to quaternary structure, interacts with the RNAP. Has a higher affinity for the core RNAP than for the holoenzyme. Its ATPase activity is stimulated by binding to RNAP.

Functionally, transcription regulator that activates transcription by stimulating RNA polymerase (RNAP) recycling in case of stress conditions such as supercoiled DNA or high salt concentrations. Probably acts by releasing the RNAP, when it is trapped or immobilized on tightly supercoiled DNA. Does not activate transcription on linear DNA. Probably not involved in DNA repair. This chain is RNA polymerase-associated protein RapA, found in Shewanella baltica (strain OS155 / ATCC BAA-1091).